Reading from the N-terminus, the 322-residue chain is tRNA uridine(34) hydroxylase (322 aa).

Positions 125–219 (QDPDTIVIDA…YGKDPEVKGQ (95 aa)) constitute a Rhodanese domain. Residue C179 is the Cysteine persulfide intermediate of the active site.

It belongs to the TrhO family.

It carries out the reaction uridine(34) in tRNA + AH2 + O2 = 5-hydroxyuridine(34) in tRNA + A + H2O. In terms of biological role, catalyzes oxygen-dependent 5-hydroxyuridine (ho5U) modification at position 34 in tRNAs. This chain is tRNA uridine(34) hydroxylase, found in Bacillus velezensis (strain DSM 23117 / BGSC 10A6 / LMG 26770 / FZB42) (Bacillus amyloliquefaciens subsp. plantarum).